Reading from the N-terminus, the 1976-residue chain is DNA-directed RNA polymerase V subunit 1 (1976 aa).

Zn(2+)-binding residues include C57, C60, C68, H71, C98, and C101. The Mg(2+) site is built by D449, D451, and D453. Residues 751-763 are bridging helix; the sequence is PYEEMAHSIAARE. Copy 1 of the repeat occupies 1215 to 1216; it reads WG. Residues 1215 to 1693 form an 18 X 2 AA repeats of [WG]-[GW] repeats region; it reads WGKRVDVGTG…AKKFPSSGGW (479 aa). 3 disordered regions span residues 1272 to 1291, 1298 to 1718, and 1847 to 1976; these read EEEMAEWAESPERDSALGEP, DFQN…EDNL, and FTKP…QTQT. Basic and acidic residues-rich tracts occupy residues 1281–1291 and 1298–1307; these read SPERDSALGEP and DFQNLHDEGK. The stretch at 1329-1330 is repeat 2; it reads WG. Positions 1332 to 1348 are enriched in polar residues; it reads SKSTGGEANPESNWEKT. Over residues 1349–1371 the composition is skewed to basic and acidic residues; that stretch reads TNVEKEDAWSSWNTRKDAQESSK. 15 repeat units span residues 1378–1379, 1415–1416, 1430–1431, 1439–1440, 1447–1448, 1464–1465, 1498–1499, 1528–1529, 1545–1546, 1562–1563, 1596–1597, 1604–1605, 1621–1622, 1638–1639, and 1641–1642. Residues 1415 to 1430 show a composition bias toward basic and acidic residues; sequence WGHKSVSDKSWDKKNW. Over residues 1491–1501 the composition is skewed to polar residues; the sequence is TESNGATWGSS. Residues 1648–1678 show a composition bias toward basic and acidic residues; that stretch reads AEDKDTNEDDRNPWVSLKETKSREKDDKERS. 2 consecutive repeat copies span residues 1680–1681 and 1692–1693. The span at 1869–1878 shows a compositional bias: polar residues; it reads EQSQPPNQSI. Over residues 1886 to 1976 the composition is skewed to low complexity; the sequence is QTQTQSQSPS…SSQSPSQTQT (91 aa).

It belongs to the RNA polymerase beta' chain family. Component of the RNA polymerase V complex. Interacts with NRPD4, NRPD2A, and (via C-terminus) with AGO4. Interacts with SUVH2. As to expression, mostly expressed in flowers, and, to a lower extent, in leaves. Present in sperm cells.

Its subcellular location is the nucleus. The protein localises to the nucleolus. It catalyses the reaction RNA(n) + a ribonucleoside 5'-triphosphate = RNA(n+1) + diphosphate. Functionally, DNA-dependent RNA polymerase catalyzes the transcription of DNA into RNA using the four ribonucleoside triphosphates as substrates. Largest and catalytic component of RNA polymerase V involved in RNA-directed DNA methylation-dependent (RdDM) silencing of endogenous repeated sequences, including transposable elements. Also required for full erasure of methylation when the RNA trigger is withdrawn. Seems also involved in the synthesis of short-interfering RNAs (siRNA). Essential component of a self-reinforcing loop coupling de novo DNA methylation to siRNA production. Involved in the maintenance of post-transcriptional RNA silencing. This Arabidopsis thaliana (Mouse-ear cress) protein is DNA-directed RNA polymerase V subunit 1 (NRPE1).